A 765-amino-acid chain; its full sequence is MAADPTELRLGSLPVFTRDDFEGDWRLVASGGFSQVFQARHRRWRTEYAIKCAPCLPPDAASSDVNYLIEEAAKMKKIKFQHIVSIYGVCKQPLGIVMEFMANGSLEKVLSTHSLCWKLRFRIIHETSLAMNFLHSIKPPLLHLDLKPGNILLDSNMHVKISDFGLSKWMEQSTRMQYIERSALRGMLSYIPPEMFLESNKAPGPKYDVYSFAIVIWELLTQKKPYSGFNMMMIIIRVAAGMRPSLQPVSDQWPSEAQQMVDLMKRCWDQDPKKRPCFLDITIETDILLSLLQSRVAVPESKALARKVSCKLSLRQPGEVNEDISQELMDSDSGNYLKRALQLSDRKNLVPRDEELCIYENKVTPLHFLVAQGSVEQVRLLLAHEVDVDCQTASGYTPLLIAAQDQQPDLCALLLAHGADANRVDEDGWAPLHFAAQNGDDGTARLLLDHGACVDAQEREGWTPLHLAAQNNFENVARLLVSRQADPNLHEAEGKTPLHVAAYFGHVSLVKLLTSQGAELDAQQRNLRTPLHLAVERGKVRAIQHLLKSGAVPDALDQSGYGPLHTAAARGKYLICKMLLRYGASLELPTHQGWTPLHLAAYKGHLEIIHLLAESHANMGALGAVNWTPLHLAARHGEEAVVSALLQCGADPNAAEQSGWTPLHLAVQRSTFLSVINLLEHHANVHARNKVGWTPAHLAALKGNTAILKVLVEAGAQLDVQDGVSCTPLQLALRSRKQGIMSFLEGKEPSVATLGGSKPGAEMEI.

Residues 22-289 (EGDWRLVASG…DITIETDILL (268 aa)) form the Protein kinase domain. ATP contacts are provided by residues 28–36 (VASGGFSQV) and Lys51. Asp145 acts as the Proton acceptor in catalysis. 12 ANK repeats span residues 361–390 (NKVT…DVDC), 394–423 (SGYT…DANR), 427–456 (DGWA…CVDA), 460–489 (EGWT…DPNL), 493–522 (EGKT…ELDA), 526–555 (NLRT…VPDA), 559–588 (SGYG…SLEL), 592–621 (QGWT…NMGA), 625–654 (VNWT…DPNA), 658–687 (SGWT…NVHA), 691–720 (VGWT…QLDV), and 724–753 (VSCT…SVAT).

The protein belongs to the protein kinase superfamily. TKL Ser/Thr protein kinase family. Highly expressed in brain and weakly expressed in placenta and spinal cord.

The enzyme catalyses L-seryl-[protein] + ATP = O-phospho-L-seryl-[protein] + ADP + H(+). It catalyses the reaction L-threonyl-[protein] + ATP = O-phospho-L-threonyl-[protein] + ADP + H(+). The chain is Ankyrin repeat and protein kinase domain-containing protein 1 (ANKK1) from Homo sapiens (Human).